Reading from the N-terminus, the 688-residue chain is MDFITINSSNKTEEFALKQVAKQATSSLMYRLGKTIILASVCVEREPVSEDFLPLVVQFLEKSYAAGKIPGGFVKREGRAQDFEILTSRLIDRTFRPLFPKDYRYPTQITLMVLSHDIENDLQVSALNAASVALFLAHIAPIKSVSACRIARIDDEFIINPNTSLLNQSSLDLFVSGTKESLNMIEMRSLGQKLNALEEPLMLKALELAQKSLKETCTLYEEVFTPHQNELLFKESQGIIFNERLLDLLKNQYFDEIIKGIESSALSERENVFHEIAKKISEAHSEFSLEEIEWSLEKVKKTEIRRMIIQDKIRPDKRALEEVRPILIESDLLPMAHSSILFTRGQTQSLVVGVLGTDNDAQTHESLEHKTPIKERFMFHYNFPPFCVGEASSIGAASRRELGHGNLAKRALETSIKNKEQVIRLVSEILESNGSSSMASVCAGSLALYASGVEIHDLVAGVAMGMVSEGQDYAILSDISGLEDAEGDMDFKIAGNLEGITAMQMDTKMSGIQLEILYQALLQAKEARKHILKIMHEAKEKIVINFSHLPTTEIFNVAPDKIVEIIGQGGRVIKEIVEKFEVKIDLNKPSGEVKIMGNKERVLKTKEFILNYLHSLDQELEQYTIDEVLEAQVKRIVDFGAFLSLPKGGEGLLRKQNMDRCQVVLREGDSIRCRVISFNKGKIALDLA.

Residues aspartate 484 and aspartate 490 each coordinate Mg(2+). The 60-residue stretch at 550–609 (PTTEIFNVAPDKIVEIIGQGGRVIKEIVEKFEVKIDLNKPSGEVKIMGNKERVLKTKEFI) folds into the KH domain. Positions 626-688 (DEVLEAQVKR…NKGKIALDLA (63 aa)) constitute an S1 motif domain.

This sequence belongs to the polyribonucleotide nucleotidyltransferase family. Requires Mg(2+) as cofactor.

The protein resides in the cytoplasm. The enzyme catalyses RNA(n+1) + phosphate = RNA(n) + a ribonucleoside 5'-diphosphate. In terms of biological role, involved in mRNA degradation. Catalyzes the phosphorolysis of single-stranded polyribonucleotides processively in the 3'- to 5'-direction. The sequence is that of Polyribonucleotide nucleotidyltransferase from Helicobacter pylori (strain G27).